We begin with the raw amino-acid sequence, 474 residues long: uncharacterized protein (474 aa).

Residues 1–23 (MLRRYLTLSFSSLLLLALLFLTG) form the signal peptide. Cys24 carries N-palmitoyl cysteine lipidation. A lipid anchor (S-diacylglycerol cysteine) is attached at Cys24.

It belongs to the MG067/MG068/MG395 family.

The protein resides in the cell membrane. This is an uncharacterized protein from Mycoplasma genitalium (strain ATCC 33530 / DSM 19775 / NCTC 10195 / G37) (Mycoplasmoides genitalium).